We begin with the raw amino-acid sequence, 263 residues long: Tropinone reductase homolog At2g29300 (263 aa).

Leu-13 to His-37 serves as a coordination point for NADP(+). Position 146 (Ser-146) interacts with substrate. Tyr-160 functions as the Proton acceptor in the catalytic mechanism.

It belongs to the short-chain dehydrogenases/reductases (SDR) family. SDR65C subfamily.

The protein is Tropinone reductase homolog At2g29300 of Arabidopsis thaliana (Mouse-ear cress).